Consider the following 445-residue polypeptide: tRNA-2-methylthio-N(6)-dimethylallyladenosine synthase (445 aa).

The MTTase N-terminal domain maps to 3–124; it reads KKLYIKTYGC…LPELISKVVR (122 aa). [4Fe-4S] cluster contacts are provided by Cys12, Cys48, Cys87, Cys162, Cys166, and Cys169. One can recognise a Radical SAM core domain in the interval 148-380; that stretch reads YPQGTSAFIS…QQELMAQQLA (233 aa). Positions 383–445 constitute a TRAM domain; sequence TSCVGSTMKV…SLNSLTGEIL (63 aa).

It belongs to the methylthiotransferase family. MiaB subfamily. Monomer. [4Fe-4S] cluster serves as cofactor.

The protein localises to the cytoplasm. It catalyses the reaction N(6)-dimethylallyladenosine(37) in tRNA + (sulfur carrier)-SH + AH2 + 2 S-adenosyl-L-methionine = 2-methylsulfanyl-N(6)-dimethylallyladenosine(37) in tRNA + (sulfur carrier)-H + 5'-deoxyadenosine + L-methionine + A + S-adenosyl-L-homocysteine + 2 H(+). Catalyzes the methylthiolation of N6-(dimethylallyl)adenosine (i(6)A), leading to the formation of 2-methylthio-N6-(dimethylallyl)adenosine (ms(2)i(6)A) at position 37 in tRNAs that read codons beginning with uridine. This chain is tRNA-2-methylthio-N(6)-dimethylallyladenosine synthase, found in Rickettsia rickettsii (strain Iowa).